Here is a 521-residue protein sequence, read N- to C-terminus: Bacillolysin (521 aa).

Residues 1–27 form the signal peptide; that stretch reads MGLGKKLSVAVAASFMSLTISLPGVQA. The propeptide at 28–221 is activation peptide; sequence AENPQLKENL…ILKKQNKVEH (194 aa). Positions 283 and 360 each coordinate Ca(2+). Histidine 364 lines the Zn(2+) pocket. Glutamate 365 is an active-site residue. Histidine 368 and glutamate 388 together coordinate Zn(2+). The Ca(2+) site is built by aspartate 399, aspartate 402, aspartate 404, glutamate 407, and valine 411. Histidine 449 serves as the catalytic Proton donor.

Belongs to the peptidase M4 family. Requires Ca(2+) as cofactor. Zn(2+) serves as cofactor.

The protein resides in the secreted. The enzyme catalyses Similar, but not identical, to that of thermolysin.. Extracellular zinc metalloprotease. This chain is Bacillolysin (npr), found in Bacillus amyloliquefaciens (Bacillus velezensis).